A 514-amino-acid polypeptide reads, in one-letter code: MNIQEEIKKRRTFAIISHPDAGKTTITEQLLYFGGEIRDAGTVKGKKTGTFAKSDWMDIEKQRGISVTSSVMQFDYDGKRVNILDTPGHEDFSEDTYRTLMAVDAAVMVVDSAKGIEAQTKKLFEVVKHRGIPVFTFMNKLDRDGREPLDLLQELEEILGIASYPMNWPIGMGKAFEGLYDLYNQRLELYKGDERFASLEDGDKLFGSNPFYEQVKDDIELLNEAGNEFSEEAILAGELTPVFFGSALTNFGVQTFLEIFLKFAPEPHGHKKTDGEIVDPYDKDFSGFVFKIQANMDPRHRDRIAFVRIVSGEFERGMSVNLPRTGKGAKLSNVTQFMAESRENVTNAVAGDIIGVYDTGTYQVGDTLTVGKNKFEFEPLPTFTPEIFMKVSAKNVMKQKSFHKGIEQLVQEGAVQLYKNYQTGEYMLGAVGQLQFEVFKHRMESEYNAEVVMNPMGKKTVRWIKPEDLDERMSSSRNILAKDRFDQPVFLFENDFALRWFADKYPDVELEEKM.

In terms of domain architecture, tr-type G spans 8–268 (KKRRTFAIIS…IFLKFAPEPH (261 aa)). GTP contacts are provided by residues 17–24 (SHPDAGKT), 85–89 (DTPGH), and 139–142 (NKLD).

This sequence belongs to the TRAFAC class translation factor GTPase superfamily. Classic translation factor GTPase family. PrfC subfamily.

It localises to the cytoplasm. Functionally, increases the formation of ribosomal termination complexes and stimulates activities of RF-1 and RF-2. It binds guanine nucleotides and has strong preference for UGA stop codons. It may interact directly with the ribosome. The stimulation of RF-1 and RF-2 is significantly reduced by GTP and GDP, but not by GMP. The polypeptide is Peptide chain release factor 3 (Streptococcus pneumoniae (strain P1031)).